Reading from the N-terminus, the 173-residue chain is C-phycocyanin-2 beta subunit (173 aa).

Asparagine 73 bears the N4-methylasparagine mark. (2R,3E)-phycocyanobilin contacts are provided by cysteine 83 and cysteine 154.

This sequence belongs to the phycobiliprotein family. As to quaternary structure, heterodimer of an alpha and a beta subunit, which further assembles into trimers and the trimers into hexamers. Contains two covalently linked bilin chromophores.

Its subcellular location is the cellular thylakoid membrane. Its function is as follows. Light-harvesting photosynthetic bile pigment-protein from the phycobiliprotein complex (phycobilisome, PBS). Phycocyanin is the major phycobiliprotein in the PBS rod. The chain is C-phycocyanin-2 beta subunit (cpcB2) from Synechococcus sp. (strain ATCC 27144 / PCC 6301 / SAUG 1402/1) (Anacystis nidulans).